Reading from the N-terminus, the 274-residue chain is 4-hydroxy-tetrahydrodipicolinate reductase (274 aa).

Residues 8–13 (GALGRM), Glu-34, 102–104 (GTT), and 128–131 (SQNF) each bind NAD(+). The Proton donor/acceptor role is filled by His-160. A (S)-2,3,4,5-tetrahydrodipicolinate-binding site is contributed by His-161. The active-site Proton donor is Lys-164. 170 to 171 (GT) provides a ligand contact to (S)-2,3,4,5-tetrahydrodipicolinate.

It belongs to the DapB family.

It is found in the cytoplasm. The catalysed reaction is (S)-2,3,4,5-tetrahydrodipicolinate + NAD(+) + H2O = (2S,4S)-4-hydroxy-2,3,4,5-tetrahydrodipicolinate + NADH + H(+). It catalyses the reaction (S)-2,3,4,5-tetrahydrodipicolinate + NADP(+) + H2O = (2S,4S)-4-hydroxy-2,3,4,5-tetrahydrodipicolinate + NADPH + H(+). The protein operates within amino-acid biosynthesis; L-lysine biosynthesis via DAP pathway; (S)-tetrahydrodipicolinate from L-aspartate: step 4/4. In terms of biological role, catalyzes the conversion of 4-hydroxy-tetrahydrodipicolinate (HTPA) to tetrahydrodipicolinate. This chain is 4-hydroxy-tetrahydrodipicolinate reductase, found in Methanocaldococcus jannaschii (strain ATCC 43067 / DSM 2661 / JAL-1 / JCM 10045 / NBRC 100440) (Methanococcus jannaschii).